A 582-amino-acid polypeptide reads, in one-letter code: Spermatogenesis-associated protein 7 homolog (582 aa).

2 disordered regions span residues 167-192 (LMSGTQKHASTSPSRHSGCGHGCDRR) and 251-289 (RKDFSDQRMEAETQTELSSFNSELGTAEKTSSKDSEVNI). Composition is skewed to polar residues over residues 169 to 181 (SGTQKHASTSPSR) and 262 to 274 (ETQTELSSFNSEL).

Found in a complex with CFAP410, NEK1 and SPATA7. Interacts with NEK1. Interacts with RPGRIP1. Interacts with RPGR. Interacts with NPHP4. Interacts with NPHP1. Interacts with AHI1. As to expression, expressed in the retina (at protein level). Expressed in the choroid region and retinal pigment endothelium, within the photoreceptor layer (at protein level).

The protein localises to the cytoplasm. Its subcellular location is the cytoskeleton. It localises to the cilium axoneme. It is found in the cilium basal body. The protein resides in the cell projection. The protein localises to the cilium. Its subcellular location is the photoreceptor outer segment. Involved in the maintenance of both rod and cone photoreceptor cells. Required for photoreceptor-specific localization of proximal connecting cilium (CC) proteins RPGR, AHI1, NPHP1, NPHP4, and RPGRIP1 at the distal CC, a photoreceptor-specific extension of the primary cilium transition zone. Maintenance of protein localization at the photoreceptor-specific distal CC is essential for normal microtubule stability and to prevent photoreceptor degeneration. This Mus musculus (Mouse) protein is Spermatogenesis-associated protein 7 homolog (Spata7).